The sequence spans 1072 residues: DNA-directed RNA polymerase subunit beta (1072 aa).

It belongs to the RNA polymerase beta chain family. As to quaternary structure, in plastids the minimal PEP RNA polymerase catalytic core is composed of four subunits: alpha, beta, beta', and beta''. When a (nuclear-encoded) sigma factor is associated with the core the holoenzyme is formed, which can initiate transcription.

The protein localises to the plastid. It is found in the chloroplast. It carries out the reaction RNA(n) + a ribonucleoside 5'-triphosphate = RNA(n+1) + diphosphate. DNA-dependent RNA polymerase catalyzes the transcription of DNA into RNA using the four ribonucleoside triphosphates as substrates. The polypeptide is DNA-directed RNA polymerase subunit beta (Lemna minor (Common duckweed)).